The following is a 456-amino-acid chain: Gamma-aminobutyric acid receptor subunit alpha-1 (456 aa).

An N-terminal signal peptide occupies residues 1–27 (MKKSPGLSDYLWAWTLFLSTLTGRSYG). At 28–253 (QPSLQDELKD…FHLKRKIGYF (226 aa)) the chain is on the extracellular side. Asn38 is a glycosylation site (N-linked (GlcNAc...) asparagine). Arg94 is a 4-aminobutanoate binding site. N-linked (GlcNAc...) asparagine glycosylation occurs at Asn138. Residue Thr157 coordinates 4-aminobutanoate. A disulfide bond links Cys166 and Cys180. The chain crosses the membrane as a helical span at residues 254–274 (VIQTYLPCIMTVILSQVSFWL). Over 275-279 (NRESV) the chain is Cytoplasmic. The helical transmembrane segment at 280–301 (PARTVFGVTTVLTMTTLSISAR) threads the bilayer. Topologically, residues 302–311 (NSLPKVAYAT) are extracellular. A helical transmembrane segment spans residues 312 to 333 (AMDWFIAVCYAFVFSALIEFAT). Residues 334 to 421 (VNYFTKRGYA…TFNSVSKIDR (88 aa)) lie on the Cytoplasmic side of the membrane. The helical transmembrane segment at 422 to 441 (LSRIAFPLLFGIFNLVYWAT) threads the bilayer. Over 442–456 (YLNREPQLKAPTPHQ) the chain is Extracellular.

It belongs to the ligand-gated ion channel (TC 1.A.9) family. Gamma-aminobutyric acid receptor (TC 1.A.9.5) subfamily. GABRA1 sub-subfamily. As to quaternary structure, heteropentamer, formed by a combination of alpha (GABRA1-6), beta (GABRB1-3), gamma (GABRG1-3), delta (GABRD), epsilon (GABRE), rho (GABRR1-3), pi (GABRP) and theta (GABRQ) subunits, each subunit exhibiting distinct physiological and pharmacological properties. Interacts with UBQLN1. Interacts with TRAK1. Interacts with KIF21B. Identified in a complex of 720 kDa composed of LHFPL4, NLGN2, GABRA1, GABRB2, GABRG2 and GABRB3. Interacts with LHFPL4. Interacts with NLGN2. Interacts with SHISA7; interaction leads to the regulation of GABA(A) receptor trafficking, channel deactivation kinetics and pharmacology. In terms of tissue distribution, cerebellar granule cells, Purkinje cells and stellate/basket cells.

Its subcellular location is the postsynaptic cell membrane. The protein localises to the cell membrane. It is found in the cytoplasmic vesicle membrane. The catalysed reaction is chloride(in) = chloride(out). Its activity is regulated as follows. Allosterically activated by benzodiazepines, the neuroanesthetic alphaxalone and pentobarbital. Inhibited by the antagonist bicuculline. Potentiated by histamine. Alpha subunit of the heteropentameric ligand-gated chloride channel gated by gamma-aminobutyric acid (GABA), a major inhibitory neurotransmitter in the brain. GABA-gated chloride channels, also named GABA(A) receptors (GABAAR), consist of five subunits arranged around a central pore and contain GABA active binding site(s) located at the alpha and beta subunit interface(s). When activated by GABA, GABAARs selectively allow the flow of chloride anions across the cell membrane down their electrochemical gradient. Alpha-1/GABRA1-containing GABAARs are largely synaptic. Chloride influx into the postsynaptic neuron following GABAAR opening decreases the neuron ability to generate a new action potential, thereby reducing nerve transmission. GABAARs containing alpha-1 and beta-2 or -3 subunits exhibit synaptogenic activity; the gamma-2 subunit being necessary but not sufficient to induce rapid synaptic contacts formation. GABAARs function also as histamine receptor where histamine binds at the interface of two neighboring beta subunits and potentiates GABA response. GABAARs containing alpha, beta and epsilon subunits also permit spontaneous chloride channel activity while preserving the structural information required for GABA-gated openings. Alpha-1-mediated plasticity in the orbitofrontal cortex regulates context-dependent action selection. Together with rho subunits, may also control neuronal and glial GABAergic transmission in the cerebellum. The chain is Gamma-aminobutyric acid receptor subunit alpha-1 (GABRA1) from Bos taurus (Bovine).